We begin with the raw amino-acid sequence, 160 residues long: 6,7-dimethyl-8-ribityllumazine synthase (160 aa).

5-amino-6-(D-ribitylamino)uracil contacts are provided by residues Trp27, 59–61 (AIE), and 81–83 (VVI). A (2S)-2-hydroxy-3-oxobutyl phosphate-binding site is contributed by 86 to 87 (QT). The Proton donor role is filled by His89. Position 114 (Asn114) interacts with 5-amino-6-(D-ribitylamino)uracil. Arg128 lines the (2S)-2-hydroxy-3-oxobutyl phosphate pocket.

It belongs to the DMRL synthase family. As to quaternary structure, homopentamer.

It catalyses the reaction (2S)-2-hydroxy-3-oxobutyl phosphate + 5-amino-6-(D-ribitylamino)uracil = 6,7-dimethyl-8-(1-D-ribityl)lumazine + phosphate + 2 H2O + H(+). It participates in cofactor biosynthesis; riboflavin biosynthesis; riboflavin from 2-hydroxy-3-oxobutyl phosphate and 5-amino-6-(D-ribitylamino)uracil: step 1/2. Catalyzes the formation of 6,7-dimethyl-8-ribityllumazine by condensation of 5-amino-6-(D-ribitylamino)uracil with 3,4-dihydroxy-2-butanone 4-phosphate. This is the penultimate step in the biosynthesis of riboflavin. The protein is 6,7-dimethyl-8-ribityllumazine synthase of Mycolicibacterium paratuberculosis (strain ATCC BAA-968 / K-10) (Mycobacterium paratuberculosis).